A 215-amino-acid chain; its full sequence is Probable phosphoglycerate mutase GpmB (215 aa).

Substrate-binding positions include 8–15 (RHGETQWN), 21–22 (QG), R58, R60, 82–85 (ELNM), 104–105 (RR), and 151–152 (GI). The active-site Tele-phosphohistidine intermediate is H9. Residue E82 is the Proton donor/acceptor of the active site.

It belongs to the phosphoglycerate mutase family. GpmB subfamily.

The enzyme catalyses (2R)-2-phosphoglycerate = (2R)-3-phosphoglycerate. The protein operates within carbohydrate degradation; glycolysis; pyruvate from D-glyceraldehyde 3-phosphate: step 3/5. In Shigella dysenteriae serotype 1 (strain Sd197), this protein is Probable phosphoglycerate mutase GpmB.